A 379-amino-acid chain; its full sequence is Homoserine O-acetyltransferase (379 aa).

The 305-residue stretch at 52–356 folds into the AB hydrolase-1 domain; sequence NVVMVLHALT…IRGHDGFLVE (305 aa). Ser157 serves as the catalytic Nucleophile. Residue Arg227 coordinates substrate. Residues Asp320 and His350 contribute to the active site. Asp351 provides a ligand contact to substrate.

Belongs to the AB hydrolase superfamily. MetX family. Homodimer.

The protein localises to the cytoplasm. It catalyses the reaction L-homoserine + acetyl-CoA = O-acetyl-L-homoserine + CoA. It functions in the pathway amino-acid biosynthesis; L-methionine biosynthesis via de novo pathway; O-acetyl-L-homoserine from L-homoserine: step 1/1. Functionally, transfers an acetyl group from acetyl-CoA to L-homoserine, forming acetyl-L-homoserine. The sequence is that of Homoserine O-acetyltransferase from Mycobacterium marinum (strain ATCC BAA-535 / M).